The primary structure comprises 157 residues: Transcription elongation factor GreA (157 aa).

It belongs to the GreA/GreB family.

Functionally, necessary for efficient RNA polymerase transcription elongation past template-encoded arresting sites. The arresting sites in DNA have the property of trapping a certain fraction of elongating RNA polymerases that pass through, resulting in locked ternary complexes. Cleavage of the nascent transcript by cleavage factors such as GreA or GreB allows the resumption of elongation from the new 3'terminus. GreA releases sequences of 2 to 3 nucleotides. The polypeptide is Transcription elongation factor GreA (Bartonella henselae (strain ATCC 49882 / DSM 28221 / CCUG 30454 / Houston 1) (Rochalimaea henselae)).